We begin with the raw amino-acid sequence, 417 residues long: uncharacterized protein (417 aa).

The next 4 membrane-spanning stretches (helical) occupy residues 87 to 107, 130 to 150, 177 to 197, and 202 to 222; these read LVVA…GYWI, IAGT…TPSV, FFIT…VYAA, and IIDT…LWPD. The segment covering 366–398 has biased composition (low complexity); that stretch reads APSAPAAAEHKATSSSNSSNSSPGSSNPTTAPT. Residues 366 to 417 form a disordered region; it reads APSAPAAAEHKATSSSNSSNSSPGSSNPTTAPTDKFRTGSPKTQPEKISAFW.

This sequence belongs to the YccS/YhfK family.

Its subcellular location is the cell membrane. This is an uncharacterized protein from Neisseria gonorrhoeae.